Reading from the N-terminus, the 420-residue chain is Probable endo-beta-1,4-glucanase celB (420 aa).

An N-terminal signal peptide occupies residues 1 to 18; sequence MLRKLTPLALALLPLVAG. N-linked (GlcNAc...) asparagine glycosylation occurs at Asn-118. Glu-215 acts as the Nucleophile in catalysis. Glu-220 serves as the catalytic Proton donor. Asn-234, Asn-293, and Asn-383 each carry an N-linked (GlcNAc...) asparagine glycan.

Belongs to the glycosyl hydrolase 7 (cellulase C) family.

It localises to the secreted. It catalyses the reaction Endohydrolysis of (1-&gt;4)-beta-D-glucosidic linkages in cellulose, lichenin and cereal beta-D-glucans.. Functionally, has endoglucanase activity on substrates containing beta-1,4 glycosidic bonds, like in carboxymethylcellulose (CMC), hydroxyethylcellulose (HEC) and beta-glucan. Involved in the degradation of complex natural cellulosic substrates. The sequence is that of Probable endo-beta-1,4-glucanase celB (celB) from Aspergillus terreus (strain NIH 2624 / FGSC A1156).